Here is a 131-residue protein sequence, read N- to C-terminus: Putative gene 51 protein (131 aa).

The chain is Putative gene 51 protein (51) from Bacillus phage SP01 (Bacteriophage SP01).